Reading from the N-terminus, the 765-residue chain is MERDQHQEICNDGGLLCESKEVSVNNHNSDAVEESEDTITSGNQEVSPANGPTLPILQKIIDCSDKIKILKDEHALVSNQVQEIKNCSLVEPEISRALQLLTTKLGALEKQYLEESSERKRLYNEVIELKGNIRVFCRCRPLNQAEIANGCASVAEFDTTQENELQILSSDSSKKHFKFDHVFKPDDGQETVFAQTKPIVTSVLDGYNVCIFAYGQTGTGKTFTMEGTPENRGVNYRTLEELFRCSESKSHLMKFELSVSMLEVYNEKIRDLLVDNSNQPPKKLEVKQSAEGTQEVPGLVEAQVYNTDGVWDLLKKGYAVRSVGSTAANEQSSRSHCLLRVTVKGENLINGQRTRSHLWLVDLAGSERVGKVEVEGERLKESQFINKSLSALGDVISALASKTSHIPYRNSKLTHMLQNSLGGDCKTLMFVQISPSSADLGETLCSLNFASRVRGIESGPARKQADVSELLKSKQMAEKLKHEEKETKKLQDNVQSLQLRLTAREHICRGLQDKVRDLEFQLAEERKTRIKQESRALATASSTTTTTSRHLRETLPTIIEKKPPLAPTRMRMPLRRITNFMPQQQPSQGHSKRFSDTTFKENNNSNRRSSSMDVNTLMKPRRSSIAFRPAPAPSAIASSNKTIMPRRRVSIATLRPEPSSLSSMETPSRPPPSFRGDPRKARYSKLFSPDRNLVTPNAMKSSRFMKSPLGGGGSSWKPSHPTVIALQKKAVVWSPLKFKNRRPSLVAIRSSASSSSASDLLRREQ.

Positions 132-456 (NIRVFCRCRP…LNFASRVRGI (325 aa)) constitute a Kinesin motor domain. Residue 215–222 (GQTGTGKT) coordinates ATP. Residues 469-534 (ELLKSKQMAE…ERKTRIKQES (66 aa)) adopt a coiled-coil conformation. Disordered stretches follow at residues 581 to 613 (MPQQ…SSMD) and 654 to 678 (LRPE…RGDP). Positions 602-611 (NNNSNRRSSS) are enriched in low complexity.

This sequence belongs to the TRAFAC class myosin-kinesin ATPase superfamily. Kinesin family. KIN-14 subfamily.

This chain is Kinesin-like protein KIN-14S, found in Arabidopsis thaliana (Mouse-ear cress).